A 1091-amino-acid chain; its full sequence is Neural cell adhesion molecule 1 (1091 aa).

Residues 1–19 (MLPAAALPWTLFFLGAAAS) form the signal peptide. Ig-like C2-type domains follow at residues 20-113 (LQVD…VNVK), 116-205 (QKLM…KDIQ), 212-301 (PSVR…ATIH), 308-403 (PKIT…LEVQ), and 406-495 (PKLQ…FILV). Residues 20 to 711 (LQVDIVPSQG…STSPTSGLGT (692 aa)) are Extracellular-facing. 2 cysteine pairs are disulfide-bonded: cysteine 41–cysteine 96 and cysteine 139–cysteine 189. Heparin-binding positions include 152–156 (KHKGR) and 161–165 (KKDVR). Asparagine 222 carries an N-linked (GlcNAc...) asparagine glycan. A disulfide bond links cysteine 235 and cysteine 287. Residues asparagine 315, asparagine 347, asparagine 423, asparagine 449, and asparagine 478 are each glycosylated (N-linked (GlcNAc...) asparagine). A disulfide bridge connects residues cysteine 329 and cysteine 385. A disulfide bridge connects residues cysteine 426 and cysteine 479. Fibronectin type-III domains lie at 499-598 (TPSS…TQPV) and 600-696 (EPSA…SAQP). Residues 712-729 (AAIVGILIVIFVLLLVAV) traverse the membrane as a helical segment. Residues 730–1091 (DVTCYFLNKC…ATEIRHLQQK (362 aa)) are Cytoplasmic-facing. Disordered stretches follow at residues 756–809 (GAKG…TEPE), 840–916 (ATAQ…NNLS), 937–1023 (ETSK…GTFK), and 1041–1091 (TPAS…LQQK). The span at 758–799 (KGKDMEEGKAAFSKDESKEPIVEVRTEEERTPNHDGGKHTEP) shows a compositional bias: basic and acidic residues. Over residues 845–856 (SPTSETTTLTSS) the composition is skewed to low complexity. Polar residues-rich tracts occupy residues 904–916 (DTPS…NNLS) and 980–1012 (QPST…PSQN). 2 stretches are compositionally biased toward basic and acidic residues: residues 1013 to 1023 (EDFKMDEGTFK) and 1068 to 1091 (KTEK…LQQK).

Post-translationally, polysialylated by ST8SIA2 and ST8SIA4. Polysialylation modulates cell interactions by confering both attractive and repulsive properties that are highly regulated by ST8SIA2 and ST8SIA4. Polysialylation is formed on a-2,3-linked sialic acid of core glycans.

It localises to the cell membrane. Its function is as follows. This protein is a cell adhesion molecule involved in neuron-neuron adhesion, neurite fasciculation, outgrowth of neurites, etc. This chain is Neural cell adhesion molecule 1, found in Gallus gallus (Chicken).